The sequence spans 720 residues: Inactive serine protease PAMR1 (720 aa).

An N-terminal signal peptide occupies residues 1–21 (MELGCWTQLGLTFLQLLLISS). Disulfide bonds link cysteine 128/cysteine 150, cysteine 177/cysteine 199, cysteine 239/cysteine 250, cysteine 244/cysteine 260, cysteine 262/cysteine 271, cysteine 280/cysteine 329, cysteine 315/cysteine 342, cysteine 414/cysteine 442, and cysteine 489/cysteine 505. One can recognise a CUB domain in the interval 128 to 236 (CGQVLRAPKG…DGFHAIYEEI (109 aa)). Positions 235–272 (EITACSSSPCFHDGTCVLDKAGSYKCACLAGYTGQRCE) constitute an EGF-like domain. 2 Sushi domains span residues 278-344 (RNCS…ICIK) and 387-444 (APTK…SCIP). Residues 445–720 (ICGKIENITA…FKDWIERNMK (276 aa)) form the Peptidase S1 domain. N-linked (GlcNAc...) asparagine glycosylation occurs at asparagine 614. 2 disulfides stabilise this stretch: cysteine 630–cysteine 649 and cysteine 661–cysteine 697.

This sequence belongs to the peptidase S1 family.

The protein resides in the secreted. Functionally, may play a role in regeneration of skeletal muscle. This is Inactive serine protease PAMR1 (PAMR1) from Homo sapiens (Human).